The following is a 623-amino-acid chain: Low affinity potassium transport system protein Kup (623 aa).

The next 12 helical transmembrane spans lie at 9–29 (LPAI…TSPL), 49–69 (VFGF…FKYL), 101–121 (VLVI…VITP), 137–157 (PSLD…LFMI), 163–183 (GMVG…LAVL), 212–232 (AVSF…EALY), 247–267 (WFSV…ALLL), 276–296 (PFFL…ATLA), 337–357 (IYIP…IVSF), 363–383 (LAAA…ILFA), 395–415 (ILVG…FSAN), and 419–439 (LFSG…IMTT).

This sequence belongs to the HAK/KUP transporter (TC 2.A.72) family.

The protein resides in the cell inner membrane. The catalysed reaction is K(+)(in) + H(+)(in) = K(+)(out) + H(+)(out). Functionally, responsible for the low-affinity transport of potassium into the cell. Likely operates as a K(+):H(+) symporter. The polypeptide is Low affinity potassium transport system protein Kup (Cronobacter sakazakii (strain ATCC BAA-894) (Enterobacter sakazakii)).